Reading from the N-terminus, the 106-residue chain is ATP-dependent Clp protease adapter protein ClpS (106 aa).

The disordered stretch occupies residues 1-22 (MNEYHNSLKSKESVKDERQQKL). Residues 9-20 (KSKESVKDERQQ) show a composition bias toward basic and acidic residues.

The protein belongs to the ClpS family. As to quaternary structure, binds to the N-terminal domain of the chaperone ClpA.

Its function is as follows. Involved in the modulation of the specificity of the ClpAP-mediated ATP-dependent protein degradation. This is ATP-dependent Clp protease adapter protein ClpS from Photorhabdus laumondii subsp. laumondii (strain DSM 15139 / CIP 105565 / TT01) (Photorhabdus luminescens subsp. laumondii).